The sequence spans 701 residues: Elongation factor G 1 (701 aa).

The tr-type G domain maps to 13–288; sequence KYTRNIGIMA…GVIDYLPSPL (276 aa). GTP is bound by residues 22-29, 86-90, and 140-143; these read AHIDAGKT, DTPGH, and NKMD.

This sequence belongs to the TRAFAC class translation factor GTPase superfamily. Classic translation factor GTPase family. EF-G/EF-2 subfamily.

Its subcellular location is the cytoplasm. Functionally, catalyzes the GTP-dependent ribosomal translocation step during translation elongation. During this step, the ribosome changes from the pre-translocational (PRE) to the post-translocational (POST) state as the newly formed A-site-bound peptidyl-tRNA and P-site-bound deacylated tRNA move to the P and E sites, respectively. Catalyzes the coordinated movement of the two tRNA molecules, the mRNA and conformational changes in the ribosome. The sequence is that of Elongation factor G 1 from Bdellovibrio bacteriovorus (strain ATCC 15356 / DSM 50701 / NCIMB 9529 / HD100).